Reading from the N-terminus, the 347-residue chain is MKNILDFTLEELKEWMKENGESAFRAKQIFDWIYKKEVFNFEEMKNISKALIGKLSENFYIGIPEVIDYLSSSEDGTRKILLGLGDGNIIECVIMRYKYGNSICVSTQIGCRMGCKFCASTLEGMVRNLTAGEILSEVLIGQKLLGERISNIVLMGSGEPLDNYDNVMKFLELVNADYGLNIGQRHITLSTCGLVPKIREMADKEMQVTLAISLHAVSDEKRKTIMPIANKYSISEILDACNYYIEKTGRRITFEYSLVSGVNDTKEDAKSLGRLLKGMLCHVNLIPVNEIKENEFKKSTKKDIETFLNTLKTYGVEATVRREMGSDINAACGQLRRSYIKSKGLKL.

Glu-91 serves as the catalytic Proton acceptor. The region spanning 97–327 (YKYGNSICVS…ATVRREMGSD (231 aa)) is the Radical SAM core domain. Cysteines 104 and 332 form a disulfide. [4Fe-4S] cluster is bound by residues Cys-111, Cys-115, and Cys-118. Residues 158-159 (GE), Ser-190, 213-215 (SLH), and Asn-289 each bind S-adenosyl-L-methionine. Cys-332 serves as the catalytic S-methylcysteine intermediate.

The protein belongs to the radical SAM superfamily. RlmN family. [4Fe-4S] cluster is required as a cofactor.

It localises to the cytoplasm. The catalysed reaction is adenosine(2503) in 23S rRNA + 2 reduced [2Fe-2S]-[ferredoxin] + 2 S-adenosyl-L-methionine = 2-methyladenosine(2503) in 23S rRNA + 5'-deoxyadenosine + L-methionine + 2 oxidized [2Fe-2S]-[ferredoxin] + S-adenosyl-L-homocysteine. The enzyme catalyses adenosine(37) in tRNA + 2 reduced [2Fe-2S]-[ferredoxin] + 2 S-adenosyl-L-methionine = 2-methyladenosine(37) in tRNA + 5'-deoxyadenosine + L-methionine + 2 oxidized [2Fe-2S]-[ferredoxin] + S-adenosyl-L-homocysteine. Its function is as follows. Specifically methylates position 2 of adenine 2503 in 23S rRNA and position 2 of adenine 37 in tRNAs. This is Probable dual-specificity RNA methyltransferase RlmN from Clostridium perfringens (strain 13 / Type A).